The chain runs to 469 residues: UDP-N-acetylmuramate--L-alanine ligase (469 aa).

Position 118–124 (118–124 (GTHGKTT)) interacts with ATP.

The protein belongs to the MurCDEF family.

Its subcellular location is the cytoplasm. The enzyme catalyses UDP-N-acetyl-alpha-D-muramate + L-alanine + ATP = UDP-N-acetyl-alpha-D-muramoyl-L-alanine + ADP + phosphate + H(+). It participates in cell wall biogenesis; peptidoglycan biosynthesis. Functionally, cell wall formation. The polypeptide is UDP-N-acetylmuramate--L-alanine ligase (Ruegeria sp. (strain TM1040) (Silicibacter sp.)).